A 369-amino-acid polypeptide reads, in one-letter code: DNA replication and repair protein RecF (369 aa).

30–37 provides a ligand contact to ATP; the sequence is GQNGMGKT.

The protein belongs to the RecF family.

The protein resides in the cytoplasm. The RecF protein is involved in DNA metabolism; it is required for DNA replication and normal SOS inducibility. RecF binds preferentially to single-stranded, linear DNA. It also seems to bind ATP. This chain is DNA replication and repair protein RecF, found in Bacteroides thetaiotaomicron (strain ATCC 29148 / DSM 2079 / JCM 5827 / CCUG 10774 / NCTC 10582 / VPI-5482 / E50).